Reading from the N-terminus, the 772-residue chain is Carnitine O-palmitoyltransferase 1, muscle isoform (772 aa).

The Cytoplasmic portion of the chain corresponds to 1 to 47 (MAEAHQAVAFQFTVTPEGVDFRLSREALKHIYLSGINSWKKRLIRIK). The helical transmembrane segment at 48–73 (NGILRGVYPGSPTSWLVVASATAGSS) threads the bilayer. Residues 74 to 102 (YYNVDISMGLVNHIQRCLPERYGPYWTPQ) are Mitochondrial intermembrane-facing. The chain crosses the membrane as a helical span at residues 103-122 (TRALLSMAVVSTGVWMIGIF). At 123–772 (FFRQTLKLLL…DLFQVPKTDS (650 aa)) the chain is on the cytoplasmic side. His473 acts as the Proton acceptor in catalysis. Position 555-567 (555-567 (GKGLIKKCRTSPD)) interacts with CoA. (R)-carnitine-binding residues include Tyr589 and Thr602.

It belongs to the carnitine/choline acetyltransferase family.

It localises to the mitochondrion outer membrane. The catalysed reaction is (R)-carnitine + hexadecanoyl-CoA = O-hexadecanoyl-(R)-carnitine + CoA. Its pathway is lipid metabolism; fatty acid beta-oxidation. Functionally, catalyzes the transfer of the acyl group of long-chain fatty acid-CoA conjugates onto carnitine, an essential step for the mitochondrial uptake of long-chain fatty acids and their subsequent beta-oxidation in the mitochondrion. The chain is Carnitine O-palmitoyltransferase 1, muscle isoform (CPT1B) from Sus scrofa (Pig).